The sequence spans 581 residues: Intermediate filament protein ifa-3 (581 aa).

Residues M1–S33 are disordered. The interval M1–E74 is head. The span at Y7 to S33 shows a compositional bias: polar residues. The IF rod domain occupies E71 to N424. The coil 1A stretch occupies residues I75–L106. The interval Q107 to M120 is linker 1. Residues Y121–L258 are coil 1B. The interval Q259 to N276 is linker 12. A coil 2 region spans residues E277–N424. Positions G425–T578 are tail. An LTD domain is found at S457–Q574.

Belongs to the intermediate filament family. As to quaternary structure, forms some heteromeric filaments with ifb-1. Expressed in the embryonic and larval hypodermis. Also expressed in the ventral nerve cord of larvae.

The protein resides in the cytoplasm. Cytoplasmic intermediate filaments provide mechanical strength to cells. Essential protein, involved in attachment structures in epidermal cells that connect muscles to the external cuticle. Required for epidermal morphogenesis in embryos. Probable component of embryonic epidermal attachment structures. In Caenorhabditis elegans, this protein is Intermediate filament protein ifa-3 (ifa-3).